The sequence spans 330 residues: Probable WRKY transcription factor 74 (330 aa).

The segment at residues 256-322 (KIADIPPDEY…YEGEHNHSRI (67 aa)) is a DNA-binding region (WRKY).

It is found in the nucleus. Transcription factor. Interacts specifically with the W box (5'-(T)TGAC[CT]-3'), a frequently occurring elicitor-responsive cis-acting element. This is Probable WRKY transcription factor 74 (WRKY74) from Arabidopsis thaliana (Mouse-ear cress).